The chain runs to 339 residues: UDP-N-acetylenolpyruvoylglucosamine reductase (339 aa).

The FAD-binding PCMH-type domain occupies 18-189 (GIDVRARLLA…LRVRLRLTRR (172 aa)). Arginine 166 is a catalytic residue. The active-site Proton donor is the serine 239. The active site involves glutamate 335.

It belongs to the MurB family. Requires FAD as cofactor.

It is found in the cytoplasm. It catalyses the reaction UDP-N-acetyl-alpha-D-muramate + NADP(+) = UDP-N-acetyl-3-O-(1-carboxyvinyl)-alpha-D-glucosamine + NADPH + H(+). It functions in the pathway cell wall biogenesis; peptidoglycan biosynthesis. Cell wall formation. The protein is UDP-N-acetylenolpyruvoylglucosamine reductase of Pseudomonas aeruginosa (strain ATCC 15692 / DSM 22644 / CIP 104116 / JCM 14847 / LMG 12228 / 1C / PRS 101 / PAO1).